We begin with the raw amino-acid sequence, 134 residues long: Urease subunit beta (134 aa).

It belongs to the urease beta subunit family. As to quaternary structure, heterotrimer of UreA (gamma), UreB (beta) and UreC (alpha) subunits. Three heterotrimers associate to form the active enzyme.

The protein resides in the cytoplasm. The catalysed reaction is urea + 2 H2O + H(+) = hydrogencarbonate + 2 NH4(+). Its pathway is nitrogen metabolism; urea degradation; CO(2) and NH(3) from urea (urease route): step 1/1. The chain is Urease subunit beta from Staphylococcus saprophyticus subsp. saprophyticus (strain ATCC 15305 / DSM 20229 / NCIMB 8711 / NCTC 7292 / S-41).